A 360-amino-acid chain; its full sequence is DNA polymerase IV (360 aa).

The 182-residue stretch at 8–189 (IIHVDMDCFF…LPLEKIPGVG (182 aa)) folds into the UmuC domain. D12 and D107 together coordinate Mg(2+). E108 is a catalytic residue.

This sequence belongs to the DNA polymerase type-Y family. As to quaternary structure, monomer. Requires Mg(2+) as cofactor.

It localises to the cytoplasm. It carries out the reaction DNA(n) + a 2'-deoxyribonucleoside 5'-triphosphate = DNA(n+1) + diphosphate. Its function is as follows. Poorly processive, error-prone DNA polymerase involved in untargeted mutagenesis. Copies undamaged DNA at stalled replication forks, which arise in vivo from mismatched or misaligned primer ends. These misaligned primers can be extended by PolIV. Exhibits no 3'-5' exonuclease (proofreading) activity. May be involved in translesional synthesis, in conjunction with the beta clamp from PolIII. This Vibrio cholerae serotype O1 (strain ATCC 39541 / Classical Ogawa 395 / O395) protein is DNA polymerase IV.